Here is a 503-residue protein sequence, read N- to C-terminus: 4-trimethylaminobutyraldehyde dehydrogenase (503 aa).

NAD(+)-binding positions include lysine 189 and 241-245 (GSVPT). Glutamate 263 acts as the Proton acceptor in catalysis. Residue cysteine 297 is the Nucleophile of the active site. An NAD(+)-binding site is contributed by glutamate 400.

This sequence belongs to the aldehyde dehydrogenase family. Homotetramer.

The protein localises to the cytoplasm. Its subcellular location is the cytosol. It catalyses the reaction 4-(trimethylamino)butanal + NAD(+) + H2O = 4-(trimethylamino)butanoate + NADH + 2 H(+). The enzyme catalyses an aldehyde + NAD(+) + H2O = a carboxylate + NADH + 2 H(+). It functions in the pathway amine and polyamine biosynthesis; carnitine biosynthesis. Functionally, converts gamma-trimethylaminobutyraldehyde into gamma-butyrobetaine with high efficiency (in vitro). Can catalyze the irreversible oxidation of a broad range of aldehydes to the corresponding acids in an NAD-dependent reaction, but with low efficiency. In Gadus morhua subsp. callarias (Baltic cod), this protein is 4-trimethylaminobutyraldehyde dehydrogenase (aldh9A1).